Here is a 297-residue protein sequence, read N- to C-terminus: 4-hydroxy-tetrahydrodipicolinate synthase (297 aa).

Position 50 (Thr-50) interacts with pyruvate. Catalysis depends on Tyr-138, which acts as the Proton donor/acceptor. The active-site Schiff-base intermediate with substrate is the Lys-166. Ile-208 is a binding site for pyruvate.

The protein belongs to the DapA family. As to quaternary structure, homotetramer; dimer of dimers.

It is found in the cytoplasm. The catalysed reaction is L-aspartate 4-semialdehyde + pyruvate = (2S,4S)-4-hydroxy-2,3,4,5-tetrahydrodipicolinate + H2O + H(+). It functions in the pathway amino-acid biosynthesis; L-lysine biosynthesis via DAP pathway; (S)-tetrahydrodipicolinate from L-aspartate: step 3/4. Catalyzes the condensation of (S)-aspartate-beta-semialdehyde [(S)-ASA] and pyruvate to 4-hydroxy-tetrahydrodipicolinate (HTPA). This chain is 4-hydroxy-tetrahydrodipicolinate synthase, found in Gluconobacter oxydans (strain 621H) (Gluconobacter suboxydans).